Reading from the N-terminus, the 242-residue chain is Glucosamine-6-phosphate deaminase (242 aa).

Aspartate 67 serves as the catalytic Proton acceptor; for enolization step. The active-site For ring-opening step is the asparagine 136. The active-site Proton acceptor; for ring-opening step is the histidine 138. The active-site For ring-opening step is the glutamate 143.

It belongs to the glucosamine/galactosamine-6-phosphate isomerase family. NagB subfamily.

It carries out the reaction alpha-D-glucosamine 6-phosphate + H2O = beta-D-fructose 6-phosphate + NH4(+). It participates in amino-sugar metabolism; N-acetylneuraminate degradation; D-fructose 6-phosphate from N-acetylneuraminate: step 5/5. Catalyzes the reversible isomerization-deamination of glucosamine 6-phosphate (GlcN6P) to form fructose 6-phosphate (Fru6P) and ammonium ion. The polypeptide is Glucosamine-6-phosphate deaminase (Clostridium perfringens (strain 13 / Type A)).